The sequence spans 332 residues: MKVTFEQLKAAFNRVLISRGVDSETANACAEMFARTTESGVYSHGVNRFPRFIQQLENGDIIPDAQPKRITSLGAIEQWDAQRSIGNLTAKKMMDRAIELAADHGIGLVALRNANHWMRGGSYGWQAAEKGYIGICWTNSIAVMPPWGAKECRIGTNPLIVAIPSTPITMVDMSMSMFSYGMLEVNRLAGRQLPVDGGFDDEGNLTKEPGVIEKNRRILPMGYWKGSGMSIVLDMIATLLSDGASVAEVTQDNSDEYGISQIFIAIEVDKLIDGPTRDAKLQRIMDYVTTAERADENQAIRLPGHEFTTLLAENRRNGITVDDSVWAKIQAL.

His44 (proton donor) is an active-site residue. Residues Ile168–Ser174, Trp224–Lys225, and Gly304–Glu306 contribute to the NAD(+) site.

This sequence belongs to the LDH2/MDH2 oxidoreductase family. DlgD subfamily. In terms of assembly, homodimer.

The protein resides in the cytoplasm. It catalyses the reaction 3-dehydro-L-gulonate + NAD(+) = 2,3-dioxo-L-gulonate + NADH + H(+). The enzyme catalyses 3-dehydro-L-gulonate + NADP(+) = 2,3-dioxo-L-gulonate + NADPH + H(+). Functionally, catalyzes the reduction of 2,3-diketo-L-gulonate in the presence of NADH, to form 3-keto-L-gulonate. This chain is 2,3-diketo-L-gulonate reductase, found in Escherichia coli O139:H28 (strain E24377A / ETEC).